Reading from the N-terminus, the 132-residue chain is Small ribosomal subunit protein uS8 (132 aa).

This sequence belongs to the universal ribosomal protein uS8 family. In terms of assembly, part of the 30S ribosomal subunit. Contacts proteins S5 and S12.

One of the primary rRNA binding proteins, it binds directly to 16S rRNA central domain where it helps coordinate assembly of the platform of the 30S subunit. The chain is Small ribosomal subunit protein uS8 from Clostridium perfringens (strain ATCC 13124 / DSM 756 / JCM 1290 / NCIMB 6125 / NCTC 8237 / Type A).